The chain runs to 710 residues: Polyribonucleotide nucleotidyltransferase (710 aa).

The Mg(2+) site is built by Asp489 and Asp495. Residues 556-615 (PKIDTIKIDVDKIKVVIGKGGETIDKIIAETGVKIDIDDEGNVSIYSSDQAAIDRTKEII) enclose the KH domain. The S1 motif domain occupies 625–693 (GEVYHAKVVR…EKGRVDASMK (69 aa)). The tract at residues 691–710 (SMKALIPRPPKPEKKEEKHD) is disordered. Over residues 700–710 (PKPEKKEEKHD) the composition is skewed to basic and acidic residues.

The protein belongs to the polyribonucleotide nucleotidyltransferase family. The cofactor is Mg(2+).

The protein localises to the cytoplasm. It catalyses the reaction RNA(n+1) + phosphate = RNA(n) + a ribonucleoside 5'-diphosphate. In terms of biological role, involved in mRNA degradation. Catalyzes the phosphorolysis of single-stranded polyribonucleotides processively in the 3'- to 5'-direction. This Streptococcus pyogenes serotype M1 protein is Polyribonucleotide nucleotidyltransferase.